The primary structure comprises 1174 residues: Male determiner protein Mdmd(Y) (1174 aa).

The segment covering 1 to 15 has biased composition (basic and acidic residues); it reads MNATDAESRKPENKP. 3 disordered regions span residues 1–51, 79–109, and 136–259; these read MNAT…SGQR, RKDG…HPVE, and KQLS…LRRS. Residues 16 to 35 are compositionally biased toward low complexity; the sequence is SSESSSSGSTSGSSDGEVSS. Residues 36–47 show a composition bias toward polar residues; that stretch reads KTYFKNNKSKVL. Residues 79 to 92 show a composition bias toward basic and acidic residues; it reads RKDGSNEMLPKEDS. Over residues 138–153 the composition is skewed to low complexity; sequence LSAYRSRSRSTRLSYS. Basic residues predominate over residues 167–180; it reads SRYKKSVLRNRRTS. Residues 183–200 show a composition bias toward basic and acidic residues; the sequence is HGRDSSTTKRSVSRDKDN. Residues 201–223 are compositionally biased toward basic residues; the sequence is RLRRRIGSSRSHTRSHSRFRRSE. Over residues 235–259 the composition is skewed to basic and acidic residues; the sequence is RSQERRHERRRSMSSDYERIALRRS. The MIF4G domain maps to 348–531; it reads KKYIHGYINK…KVLFQVRRDG (184 aa). Positions 597 to 608 are enriched in low complexity; the sequence is DSDGSFGSGSNS. Positions 597 to 616 are disordered; sequence DSDGSFGSGSNSETALSDCD. Positions 641-757 constitute an MI domain; sequence ALRRTIYLTL…SWDVLDCIKL (117 aa). Over residues 840–857 the composition is skewed to low complexity; the sequence is SAPSSSSSSSLSSELSAP. Disordered regions lie at residues 840–1045 and 1089–1135; these read SAPS…SRTK and KGGP…SREY. 2 stretches are compositionally biased toward basic residues: residues 869–886 and 895–909; these read KKKH…KNPS and IVGK…KTIK. A compositionally biased stretch (basic and acidic residues) spans 910–924; sequence RRTDKDNSSSKDNFL. A compositionally biased stretch (low complexity) spans 926–957; it reads SESSSNESISLDSLSSELFAPSSYSSSESSND. Residues 963–1001 are compositionally biased toward basic residues; the sequence is KHKGKNKKMTKKKNPSNKREKTKKKLSKNKKAPNKNTKK. Low complexity predominate over residues 1010–1020; the sequence is SSESSISESKS. Residues 1034 to 1045 are compositionally biased toward basic residues; it reads RKKRVTSKSRTK. Residues 1089–1118 are compositionally biased toward basic and acidic residues; the sequence is KGGPNCRKDNYGNRQNHEISQRHDSEIKRR. Residues 1119–1130 show a composition bias toward basic residues; the sequence is REERKKRHHEKN.

Belongs to the CWC22 family. Component of the spliceosome C complex.

Its subcellular location is the nucleus speckle. Functionally, male determiner protein (M-factor) that controls male somatic sexual differentiation. Acts as a dominant factor that regulates the mRNA splicing of transformer (tra) and doublesex (dsx) transcripts and promotes expression of male splice forms of tra and dsx. Probably acts as a component of the spliceosome C complex required for mRNA splicing factor and exon-junction complex (EJC) assembly. Hinders eIF4AIII from non-specifically binding RNA and escorts it to the splicing machinery to promote EJC assembly on mature mRNAs. The polypeptide is Male determiner protein Mdmd(Y) (Musca domestica (House fly)).